The following is a 306-amino-acid chain: tRNA dimethylallyltransferase (306 aa).

Residue Gly9–Thr16 coordinates ATP. Thr11–Thr16 provides a ligand contact to substrate. The interaction with substrate tRNA stretch occupies residues Asp34–Gln37.

This sequence belongs to the IPP transferase family. Monomer. The cofactor is Mg(2+).

The catalysed reaction is adenosine(37) in tRNA + dimethylallyl diphosphate = N(6)-dimethylallyladenosine(37) in tRNA + diphosphate. Functionally, catalyzes the transfer of a dimethylallyl group onto the adenine at position 37 in tRNAs that read codons beginning with uridine, leading to the formation of N6-(dimethylallyl)adenosine (i(6)A). The polypeptide is tRNA dimethylallyltransferase (Lactobacillus johnsonii (strain CNCM I-12250 / La1 / NCC 533)).